We begin with the raw amino-acid sequence, 176 residues long: Nucleoside triphosphate/diphosphate phosphatase (176 aa).

R23 (proton donor) is an active-site residue. Mg(2+) contacts are provided by N87, D103, D105, D107, D120, and E123.

Belongs to the Ntdp family. It depends on Mg(2+) as a cofactor.

The enzyme catalyses a ribonucleoside 5'-triphosphate + H2O = a ribonucleoside 5'-diphosphate + phosphate + H(+). It catalyses the reaction a ribonucleoside 5'-diphosphate + H2O = a ribonucleoside 5'-phosphate + phosphate + H(+). Functionally, has nucleoside phosphatase activity towards nucleoside triphosphates and nucleoside diphosphates. The chain is Nucleoside triphosphate/diphosphate phosphatase (yjjG) from Lactococcus lactis subsp. lactis (strain IL1403) (Streptococcus lactis).